Reading from the N-terminus, the 78-residue chain is Large ribosomal subunit protein bL28 (78 aa).

This sequence belongs to the bacterial ribosomal protein bL28 family.

The chain is Large ribosomal subunit protein bL28 from Rippkaea orientalis (strain PCC 8801 / RF-1) (Cyanothece sp. (strain PCC 8801)).